We begin with the raw amino-acid sequence, 393 residues long: Na(+)/H(+) antiporter NhaA (393 aa).

A run of 12 helical transmembrane segments spans residues 23 to 43 (AGGI…NSPF), 58 to 78 (LSLA…LVGL), 96 to 116 (MLPG…FAVL), 126 to 146 (GWAV…SLLG), 155 to 175 (VFLA…IAIF), 178 to 198 (AEIS…LFVM), 201 to 221 (MGVV…FFVF), 224 to 244 (GVHA…KPAP), 265 to 285 (VAFI…FKGL), 298 to 318 (ILLG…WLAI), 334 to 354 (LYGV…IGLL), and 367 to 387 (IGVL…LRAA).

Belongs to the NhaA Na(+)/H(+) (TC 2.A.33) antiporter family.

Its subcellular location is the cell inner membrane. The catalysed reaction is Na(+)(in) + 2 H(+)(out) = Na(+)(out) + 2 H(+)(in). In terms of biological role, na(+)/H(+) antiporter that extrudes sodium in exchange for external protons. The protein is Na(+)/H(+) antiporter NhaA of Brucella canis (strain ATCC 23365 / NCTC 10854 / RM-666).